We begin with the raw amino-acid sequence, 732 residues long: Ionotropic receptor 40a (732 aa).

A signal peptide spans 1–19; that stretch reads MHKFLALGLLPYLLGLLNS. 3 N-linked (GlcNAc...) asparagine glycosylation sites follow: Asn-18, Asn-235, and Asn-299. Residues 20 to 369 are Extracellular-facing; the sequence is TRLTFIGNDE…RPFKQDIWPH (350 aa). Residues 370–390 form a helical membrane-spanning segment; the sequence is LILTIIFSGPIFYGIIALPYI. Residues 391 to 465 are Cytoplasmic-facing; it reads WRRRWANSDV…NELHNGYRAK (75 aa). A helical membrane pass occupies residues 466-486; sequence FLTIVYWIAATYVLADVYSAQ. At 487–688 the chain is on the extracellular side; that stretch reads LTSQFARPAR…LNLRMLQGAF (202 aa). N-linked (GlcNAc...) asparagine glycosylation is present at Asn-531. A helical transmembrane segment spans residues 689–709; it reads IALGVGSLAAGVILLLEIVFI. Over 710-732 the chain is Cytoplasmic; sequence KLDQARLWMLCSRLQWIRYDRKV.

The protein belongs to the glutamate-gated ion channel (TC 1.A.10.1) family. As to expression, in the antenna, detected in sacculus neurons which innervate the first and second chambers (at protein level).

The protein localises to the cell membrane. Functionally, integral part of a neural sensory system in the antenna that provides the neural basis for the response to environmental changes in humidity (hygrosensation). Together with Ir25a and Ir93a, mediates the response of the hygrosensory sacculus neurons to changes in relative humidity and is required for dry detection behavior. The chain is Ionotropic receptor 40a from Drosophila melanogaster (Fruit fly).